The primary structure comprises 497 residues: Maintenance of mitochondrial morphology protein 1 (497 aa).

Topologically, residues 1–28 are lumenal; that stretch reads MSSVLNPSSPHSWDLCCSSSSNRSYHRP. A helical transmembrane segment spans residues 29–55; sequence THPIVGLLVGQLSVVLLIGAFIKFFIF. Over 56–497 the chain is Cytoplasmic; that stretch reads GEAPPSPSRS…GSLPDAVPIT (442 aa). Disordered regions lie at residues 60 to 107, 284 to 330, 402 to 421, and 437 to 497; these read PSPS…SSST, ESST…STTG, TGVR…AAGV, and EMLH…VPIT. The span at 66-77 shows a compositional bias: basic residues; the sequence is QTHRTSQHKRSY. The segment covering 81 to 94 has biased composition (basic and acidic residues); sequence GARDLSPRTLKEKP. Polar residues-rich tracts occupy residues 95-107, 284-302, and 311-330; these read SSNV…SSST, ESST…NLRS, and PQES…STTG. An SMP-LTD domain is found at 140 to 393; it reads QPESLDWFNV…EPRVQVVALP (254 aa). Low complexity predominate over residues 412–421; sequence DVSSSDAAGV. Basic and acidic residues predominate over residues 440–451; the sequence is HAAREVDAEGLR. Polar residues predominate over residues 462–473; the sequence is GSSSKYAQQNQS. Residues 474 to 484 are compositionally biased toward basic and acidic residues; the sequence is SRERGRADDPF.

This sequence belongs to the MMM1 family. Homodimer. Component of the ER-mitochondria encounter structure (ERMES) or MDM complex, composed of MMM1, MDM10, MDM12 and MDM34. An MMM1 homodimer associates with one molecule of MDM12 on each side in a pairwise head-to-tail manner, and the SMP-LTD domains of MMM1 and MDM12 generate a continuous hydrophobic tunnel for phospholipid trafficking.

The protein localises to the endoplasmic reticulum membrane. In terms of biological role, component of the ERMES/MDM complex, which serves as a molecular tether to connect the endoplasmic reticulum (ER) and mitochondria. Components of this complex are involved in the control of mitochondrial shape and protein biogenesis, and function in nonvesicular lipid trafficking between the ER and mitochondria. The MDM12-MMM1 subcomplex functions in the major beta-barrel assembly pathway that is responsible for biogenesis of all outer membrane beta-barrel proteins, and acts in a late step after the SAM complex. The MDM10-MDM12-MMM1 subcomplex further acts in the TOM40-specific pathway after the action of the MDM12-MMM1 complex. Essential for establishing and maintaining the structure of mitochondria and maintenance of mtDNA nucleoids. The chain is Maintenance of mitochondrial morphology protein 1 from Uncinocarpus reesii (strain UAMH 1704).